Here is a 532-residue protein sequence, read N- to C-terminus: Flavin-containing monooxygenase 1 (532 aa).

N-acetylalanine is present on alanine 2. Residues 2-510 (AKRVAIVGAG…TRIVKESPSP (509 aa)) lie on the Lumenal side of the membrane. Residues 9 to 13 (GAGVS), glutamate 32, 40 to 41 (LW), and 61 to 62 (NS) contribute to the FAD site. 60–61 (SN) is a binding site for NADP(+). A glycan (N-linked (GlcNAc...) (high mannose) asparagine) is linked at asparagine 120. 195–198 (SGTD) lines the NADP(+) pocket. Residues 511-531 (FASLLKLFSFLALLVAIFQIF) form a helical membrane-spanning segment. Position 532 (leucine 532) is a topological domain, cytoplasmic.

Belongs to the FMO family. It depends on FAD as a cofactor. Liver.

The protein resides in the endoplasmic reticulum membrane. The catalysed reaction is hypotaurine + NADPH + O2 + H(+) = taurine + NADP(+) + H2O. It catalyses the reaction hypotaurine + NADH + O2 + H(+) = taurine + NAD(+) + H2O. The enzyme catalyses trimethylamine + NADPH + O2 = trimethylamine N-oxide + NADP(+) + H2O. It carries out the reaction N,N-dimethylaniline + NADPH + O2 + H(+) = N,N-dimethylaniline N-oxide + NADP(+) + H2O. Broad spectrum monooxygenase that catalyzes the oxygenation of a wide variety of nitrogen- and sulfur-containing compounds including xenobiotics. Catalyzes the S-oxygenation of hypotaurine to produce taurine, an organic osmolyte involved in cell volume regulation as well as a variety of cytoprotective and developmental processes. In vitro, catalyzes the N-oxygenation of trimethylamine (TMA) to produce trimethylamine N-oxide (TMAO) and could therefore participate to the detoxification of this compound that is generated by the action of gut microbiota from dietary precursors such as choline, choline containing compounds, betaine or L-carnitine. In Sus scrofa (Pig), this protein is Flavin-containing monooxygenase 1 (FMO1).